The chain runs to 131 residues: MRRITCCFPIKIHRRQPPSPPSTITLSSYEYSSLAVGIISDLKEEGCDTLLVKLQKDANRKIGMGVGVRDRGILITTVVPGSVAAEKLKVGDRILAVNGRPILDQRSVVKSVKASGQRLYLQIARPHKVHK.

One can recognise a PDZ domain in the interval 51–127; sequence LVKLQKDANR…RLYLQIARPH (77 aa).

The polypeptide is PDZ domain-containing protein C52A11.3 (Caenorhabditis elegans).